Consider the following 260-residue polypeptide: Carbonic anhydrase 2 (260 aa).

Serine 2 is subject to N-acetylserine. Serine 2 carries the post-translational modification Phosphoserine. In terms of domain architecture, Alpha-carbonic anhydrase spans 3–259 (HHWGYGKHNG…LKNRQVRGFP (257 aa)). Histidine 64 acts as the Proton donor/acceptor in catalysis. Residues histidine 94, histidine 96, and histidine 119 each contribute to the Zn(2+) site. Phosphoserine occurs at positions 165 and 172. 198 to 199 (TT) contributes to the substrate binding site.

This sequence belongs to the alpha-carbonic anhydrase family. As to quaternary structure, interacts with SLC4A4. Interaction with SLC4A7 regulates SLC4A7 transporter activity. Requires Zn(2+) as cofactor.

The protein localises to the cytoplasm. The protein resides in the cell membrane. It carries out the reaction hydrogencarbonate + H(+) = CO2 + H2O. The enzyme catalyses urea = cyanamide + H2O. Its activity is regulated as follows. Inhibited by acetazolamide. Catalyzes the reversible hydration of carbon dioxide. Can also hydrate cyanamide to urea. Involved in the regulation of fluid secretion into the anterior chamber of the eye. Essential for bone resorption and osteoclast differentiation. Contributes to intracellular pH regulation in the duodenal upper villous epithelium during proton-coupled peptide absorption. Stimulates the chloride-bicarbonate exchange activity of SLC26A6. The sequence is that of Carbonic anhydrase 2 (CA2) from Bos taurus (Bovine).